A 176-amino-acid polypeptide reads, in one-letter code: Small ribosomal subunit protein uS5 (176 aa).

The S5 DRBM domain maps to 11-74 (LSEVLVDVNR…QAAKKRMMKV (64 aa)).

Belongs to the universal ribosomal protein uS5 family. As to quaternary structure, part of the 30S ribosomal subunit. Contacts proteins S4 and S8.

In terms of biological role, with S4 and S12 plays an important role in translational accuracy. Functionally, located at the back of the 30S subunit body where it stabilizes the conformation of the head with respect to the body. This Rickettsia conorii (strain ATCC VR-613 / Malish 7) protein is Small ribosomal subunit protein uS5.